The sequence spans 354 residues: Homer protein homolog 2 (354 aa).

Positions Met1–Ala110 constitute a WH1 domain. Residues Ser92–Glu122 are a coiled coil. The span at Ile112–Glu122 shows a compositional bias: basic and acidic residues. The disordered stretch occupies residues Ile112–Asn166. A compositionally biased stretch (polar residues) spans Thr123–Gly146. Residues Thr160 to Phe329 adopt a coiled-coil conformation.

This sequence belongs to the Homer family. In terms of assembly, forms coiled-coil structures that mediate homo- and heteromultimerization. Interacts with NFATC2; interaction is reduced by AKT activation. Interacts with NFATC1 and NFATC4. Interacts with DAGLA (via PPXXF motif); this interaction is required for the cell membrane localization of DAGLA.

It is found in the cytoplasm. The protein resides in the cell membrane. The protein localises to the postsynaptic density. Its subcellular location is the synapse. It localises to the cell projection. It is found in the stereocilium. Postsynaptic density scaffolding protein. Binds and cross-links cytoplasmic regions of GRM1, GRM5, ITPR1, DNM3, RYR1, RYR2, SHANK1 and SHANK3. By physically linking GRM1 and GRM5 with ER-associated ITPR1 receptors, it aids the coupling of surface receptors to intracellular calcium release. May also couple GRM1 to PI3 kinase through its interaction with AGAP2. Isoforms can be differently regulated and may play an important role in maintaining the plasticity at glutamatergic synapses. Required for normal hearing. Negatively regulates T cell activation by inhibiting the calcineurin-NFAT pathway. Acts by competing with calcineurin/PPP3CA for NFAT protein binding, hence preventing NFAT activation by PPP3CA. This chain is Homer protein homolog 2, found in Homo sapiens (Human).